The following is a 519-amino-acid chain: MAAEREPPPLGDGKPTDFEDLEDGEDLFTSTVSTLESSPSSPEPASLPAEDISANSNGPKPTEVVLDDDREDLFAEATEEVSLDSPEREPILSSEPSPAVTPVTPTTLIAPRIESKSMSAPVIFDRSREEIEEEANGDIFDIEIGVSDPEKVGDGMNAYMAYRVTTKTSLSMFSKSEFSVKRRFSDFLGLHSKLASKYLHVGYIVPPAPEKSIVGMTKVKVGKEDSSSTEFVEKRRAALERYLQRTVKHPTLLQDPDLRQFLESSELPRAVNTQALSGAGILRMVNKAADAVNKMTIKMNESDAWFEEKQQQFENLDQQLRKLHVSVEALVCHRKELSANTAAFAKSAAMLGNSEDHTALSRALSQLAEVEEKIDQLHQEQAFADFYMFSELLSDYIRLIAAVKGVFDHRMKCWQKWEDAQITLLKKREAEAKMMVANKPDKIQQAKNEIREWEAKVQQGERDFEQISKTIRKEVGRFEKERVKDFKTVIIKYLESLVQTQQQLIKYWEAFLPEAKAIA.

Residues 1–104 (MAAEREPPPL…EPSPAVTPVT (104 aa)) form a disordered region. Composition is skewed to low complexity over residues 27–50 (LFTS…LPAE) and 93–104 (SSEPSPAVTPVT). S97 is modified (phosphoserine). 2 positions are modified to phosphothreonine: T101 and T104. Residues S117 and S119 each carry the phosphoserine modification. The PX domain maps to 140–269 (FDIEIGVSDP…QFLESSELPR (130 aa)). R183, S185, K211, and R235 together coordinate a 1,2-diacyl-sn-glycero-3-phospho-(1D-myo-inositol-3-phosphate). Phosphoserine is present on S185. The interaction with RhoG stretch occupies residues 260–519 (QFLESSELPR…AFLPEAKAIA (260 aa)). S277 is modified (phosphoserine). Positions 278–295 (GAGILRMVNKAADAVNKM) are membrane-binding amphipathic helix. Residues 299-519 (MNESDAWFEE…AFLPEAKAIA (221 aa)) enclose the BAR domain. An N6-acetyllysine modification is found at K469.

It belongs to the sorting nexin family. As to quaternary structure, predominantly forms heterodimers with BAR domain-containing sorting nexins SNX5, SNX6 and SNX32; can self-associate to form homodimers. The heterodimers are proposed to self-assemble into helical arrays on the membrane to stabilize and expand local membrane curvature underlying endosomal tubule formation. Thought to be a component of the originally described retromer complex (also called SNX-BAR retromer) which is a pentamer containing the heterotrimeric retromer cargo-selective complex (CSC), also described as vacuolar protein sorting subcomplex (VPS), and a heterodimeric membrane-deforming subcomplex formed between SNX1 or SNX2 and SNX5 or SNX6 (also called SNX-BAR subcomplex); the respective CSC and SNX-BAR subcomplexes associate with low affinity. Interacts with SNX5, SNX6, SNX32, VPS26A, VPS29, VPS35, FNBP1, KALRN, RHOG (GDP-bound form).

Its subcellular location is the early endosome membrane. It localises to the cell projection. The protein localises to the lamellipodium. Involved in several stages of intracellular trafficking. Interacts with membranes containing phosphatidylinositol 3-phosphate (PtdIns(3P)) or phosphatidylinositol 3,5-bisphosphate (PtdIns(3,5)P2). Acts in part as component of the retromer membrane-deforming SNX-BAR subcomplex. The SNX-BAR retromer mediates retrograde transport of cargo proteins from endosomes to the trans-Golgi network (TGN) and is involved in endosome-to-plasma membrane transport for cargo protein recycling. The SNX-BAR subcomplex functions to deform the donor membrane into a tubular profile called endosome-to-TGN transport carrier (ETC). Can sense membrane curvature and has in vitro vesicle-to-membrane remodeling activity. Required for retrograde endosome-to-TGN transport of TGN38. Promotes KALRN- and RHOG-dependent but retromer-independent membrane remodeling such as lamellipodium formation; the function is dependent on GEF activity of KALRN. The protein is Sorting nexin-2 (SNX2) of Homo sapiens (Human).